We begin with the raw amino-acid sequence, 829 residues long: Ectonucleotide pyrophosphatase/phosphodiesterase C27A7.1 (829 aa).

The helical; Signal-anchor for type II membrane protein transmembrane segment at 54 to 74 (VIGIAVLLLAMVVIVVIVLLL) threads the bilayer. T224 (nucleophile) is an active-site residue. 8 N-linked (GlcNAc...) asparagine glycosylation sites follow: N296, N424, N514, N542, N582, N649, N733, and N748. Residues C439 and C782 are joined by a disulfide bond.

This sequence belongs to the nucleotide pyrophosphatase/phosphodiesterase family.

It localises to the membrane. Functionally, probable phosphodiesterase. The chain is Ectonucleotide pyrophosphatase/phosphodiesterase C27A7.1 from Caenorhabditis elegans.